Reading from the N-terminus, the 247-residue chain is Adenosylcobinamide-GDP ribazoletransferase (247 aa).

A run of 5 helical transmembrane segments spans residues 34 to 54, 57 to 77, 113 to 133, 138 to 158, and 194 to 214; these read IITF…VFMV, AWCG…LMTG, GGLA…ELAL, ILAS…LLMY, and VLLL…AIFI.

It belongs to the CobS family. It depends on Mg(2+) as a cofactor.

The protein resides in the cell inner membrane. The enzyme catalyses alpha-ribazole + adenosylcob(III)inamide-GDP = adenosylcob(III)alamin + GMP + H(+). The catalysed reaction is alpha-ribazole 5'-phosphate + adenosylcob(III)inamide-GDP = adenosylcob(III)alamin 5'-phosphate + GMP + H(+). The protein operates within cofactor biosynthesis; adenosylcobalamin biosynthesis; adenosylcobalamin from cob(II)yrinate a,c-diamide: step 7/7. Its function is as follows. Joins adenosylcobinamide-GDP and alpha-ribazole to generate adenosylcobalamin (Ado-cobalamin). Also synthesizes adenosylcobalamin 5'-phosphate from adenosylcobinamide-GDP and alpha-ribazole 5'-phosphate. The protein is Adenosylcobinamide-GDP ribazoletransferase of Shigella flexneri serotype 5b (strain 8401).